The chain runs to 149 residues: UPF0179 protein rrnAC1064 (149 aa).

It belongs to the UPF0179 family.

The chain is UPF0179 protein rrnAC1064 from Haloarcula marismortui (strain ATCC 43049 / DSM 3752 / JCM 8966 / VKM B-1809) (Halobacterium marismortui).